We begin with the raw amino-acid sequence, 387 residues long: Chaperone protein DnaJ (387 aa).

The J domain maps to 4–68; that stretch reads DFYDVLGVSR…EKRQMYDQLG (65 aa). A disordered region spans residues 76–135; it reads EKRGGVGGGGNSSGGSARGDPFGGMGGQGSPFGDIFEQFFGGGQGQRRQGNRPRQGQNLQ. A compositionally biased stretch (gly residues) spans 80-105; it reads GVGGGGNSSGGSARGDPFGGMGGQGS. The segment covering 121-133 has biased composition (low complexity); sequence QRRQGNRPRQGQN. Residues 148-230 form a CR-type zinc finger; it reads GVEKQFTVRR…CNGDGVTRQE (83 aa). Positions 161, 164, 178, 181, 204, 207, 218, and 221 each coordinate Zn(2+). 4 CXXCXGXG motif repeats span residues 161–168, 178–185, 204–211, and 218–225; these read CPDCNGRG, CPQCNGQG, CPRCDGSG, and CSTCNGDG.

Belongs to the DnaJ family. As to quaternary structure, homodimer. It depends on Zn(2+) as a cofactor.

It localises to the cytoplasm. Participates actively in the response to hyperosmotic and heat shock by preventing the aggregation of stress-denatured proteins and by disaggregating proteins, also in an autonomous, DnaK-independent fashion. Unfolded proteins bind initially to DnaJ; upon interaction with the DnaJ-bound protein, DnaK hydrolyzes its bound ATP, resulting in the formation of a stable complex. GrpE releases ADP from DnaK; ATP binding to DnaK triggers the release of the substrate protein, thus completing the reaction cycle. Several rounds of ATP-dependent interactions between DnaJ, DnaK and GrpE are required for fully efficient folding. Also involved, together with DnaK and GrpE, in the DNA replication of plasmids through activation of initiation proteins. The chain is Chaperone protein DnaJ from Haloquadratum walsbyi (strain DSM 16790 / HBSQ001).